The following is a 185-amino-acid chain: Peptide methionine sulfoxide reductase MsrA (185 aa).

Residue C12 is part of the active site.

Belongs to the MsrA Met sulfoxide reductase family.

The catalysed reaction is L-methionyl-[protein] + [thioredoxin]-disulfide + H2O = L-methionyl-(S)-S-oxide-[protein] + [thioredoxin]-dithiol. The enzyme catalyses [thioredoxin]-disulfide + L-methionine + H2O = L-methionine (S)-S-oxide + [thioredoxin]-dithiol. Its function is as follows. Has an important function as a repair enzyme for proteins that have been inactivated by oxidation. Catalyzes the reversible oxidation-reduction of methionine sulfoxide in proteins to methionine. The protein is Peptide methionine sulfoxide reductase MsrA of Granulibacter bethesdensis (strain ATCC BAA-1260 / CGDNIH1).